Here is a 248-residue protein sequence, read N- to C-terminus: Ribonuclease PH (248 aa).

Residues R86 and 124 to 126 contribute to the phosphate site; that span reads GTR.

It belongs to the RNase PH family. As to quaternary structure, homohexameric ring arranged as a trimer of dimers.

The catalysed reaction is tRNA(n+1) + phosphate = tRNA(n) + a ribonucleoside 5'-diphosphate. Its function is as follows. Phosphorolytic 3'-5' exoribonuclease that plays an important role in tRNA 3'-end maturation. Removes nucleotide residues following the 3'-CCA terminus of tRNAs; can also add nucleotides to the ends of RNA molecules by using nucleoside diphosphates as substrates, but this may not be physiologically important. Probably plays a role in initiation of 16S rRNA degradation (leading to ribosome degradation) during starvation. This is Ribonuclease PH from Listeria welshimeri serovar 6b (strain ATCC 35897 / DSM 20650 / CCUG 15529 / CIP 8149 / NCTC 11857 / SLCC 5334 / V8).